A 79-amino-acid polypeptide reads, in one-letter code: Small ribosomal subunit protein bS18 (79 aa).

Belongs to the bacterial ribosomal protein bS18 family. Part of the 30S ribosomal subunit. Forms a tight heterodimer with protein bS6.

In terms of biological role, binds as a heterodimer with protein bS6 to the central domain of the 16S rRNA, where it helps stabilize the platform of the 30S subunit. In Streptococcus pyogenes serotype M49 (strain NZ131), this protein is Small ribosomal subunit protein bS18.